Reading from the N-terminus, the 422-residue chain is L-threonine dehydratase biosynthetic IlvA (422 aa).

Lys-56 is subject to N6-(pyridoxal phosphate)lysine. Pyridoxal 5'-phosphate contacts are provided by residues Asn-83, 189–193 (GGGGL), and Ser-315. The ACT-like domain occupies 339–413 (HYFILNFPQR…FDPSNIYINE (75 aa)).

Belongs to the serine/threonine dehydratase family. In terms of assembly, homotetramer. The cofactor is pyridoxal 5'-phosphate.

It catalyses the reaction L-threonine = 2-oxobutanoate + NH4(+). The protein operates within amino-acid biosynthesis; L-isoleucine biosynthesis; 2-oxobutanoate from L-threonine: step 1/1. Its function is as follows. Catalyzes the anaerobic formation of alpha-ketobutyrate and ammonia from threonine in a two-step reaction. The first step involved a dehydration of threonine and a production of enamine intermediates (aminocrotonate), which tautomerizes to its imine form (iminobutyrate). Both intermediates are unstable and short-lived. The second step is the nonenzymatic hydrolysis of the enamine/imine intermediates to form 2-ketobutyrate and free ammonia. In the low water environment of the cell, the second step is accelerated by RidA. The chain is L-threonine dehydratase biosynthetic IlvA (ilvA) from Staphylococcus aureus (strain bovine RF122 / ET3-1).